The chain runs to 354 residues: MSSAIVVSQDAESLGLQIYSRKEKSLGVLVSNFLRLYNRDDVDLIGLDDAAGQLGVERRRIYDVVNILESIGIVARRGKNQYSWKGFGEIPRSLDELKEEGMRERLGYSSSNNSDKVSNGCEREEPLTLTPDDQENSSSSKMDQKKEKSLWLLAQNFVKMFLCSDDDLITLDSAAKALLSDSPDSVHMRTKVRRLYDIANVFASMNLIEKTHIPVTRKPAYRWLGSKSIAERGLSLFNSGEPKRVFGTEITNLRAKRNKTYCSSIRKQIGYKKHDEENTEQESKPAASKYVFGPFSPIGASKTNNDKVGKGRLLEIEALASTYQPQYCNQEITGLLGHFTEAWKKWYAEVDRNK.

Residues 21-86 mediate DNA binding; that stretch reads RKEKSLGVLV…RGKNQYSWKG (66 aa). A disordered region spans residues 104 to 143; it reads ERLGYSSSNNSDKVSNGCEREEPLTLTPDDQENSSSSKMD. The segment covering 108-117 has biased composition (polar residues); the sequence is YSSSNNSDKV. The DNA-binding element occupies 145-225; that stretch reads KKEKSLWLLA…TRKPAYRWLG (81 aa).

The protein belongs to the E2F/DP family. High expression in young cotyledons and leaves, hypocotyls, shoot apical meristem, roots and mature pollen grains, moderate in developing trichomes, flowers and at early stages of developing anthers, and barely detectable in mature leaves. Not detected in primary root meristem, emerging lateral roots, pistils, developing embryos and siliques.

It localises to the nucleus. The protein resides in the cytoplasm. Functionally, inhibitor of E2F-dependent activation of gene expression. Binds specifically the E2 recognition site without interacting with DP proteins and prevents transcription activation by E2F/DP heterodimers. Does not bind retinoblastoma-related proteins. Acts as a growth regulator but is not associated with changes in the expression of cell cycle marker genes or in nuclear ploidy levels. Has no effect on cell proliferation, but may repress cell wall biosynthesis genes during cell elongation in differentiated cells. The polypeptide is E2F transcription factor-like E2FF (E2FF) (Arabidopsis thaliana (Mouse-ear cress)).